We begin with the raw amino-acid sequence, 759 residues long: 5-methyltetrahydropteroyltriglutamate--homocysteine methyltransferase (759 aa).

The span at M1–G16 shows a compositional bias: polar residues. The tract at residues M1–P22 is disordered. 5-methyltetrahydropteroyltri-L-glutamate is bound by residues R24 to K27 and K118. Residues I437–S439 and E490 contribute to the L-homocysteine site. Residues I437–S439 and E490 contribute to the L-methionine site. 5-methyltetrahydropteroyltri-L-glutamate contacts are provided by residues R521–C522 and W567. An L-homocysteine-binding site is contributed by D605. D605 is a binding site for L-methionine. E611 provides a ligand contact to 5-methyltetrahydropteroyltri-L-glutamate. Zn(2+) contacts are provided by H647, C649, and E671. H700 (proton donor) is an active-site residue. C732 contacts Zn(2+).

This sequence belongs to the vitamin-B12 independent methionine synthase family. Zn(2+) serves as cofactor.

The catalysed reaction is 5-methyltetrahydropteroyltri-L-glutamate + L-homocysteine = tetrahydropteroyltri-L-glutamate + L-methionine. The protein operates within amino-acid biosynthesis; L-methionine biosynthesis via de novo pathway; L-methionine from L-homocysteine (MetE route): step 1/1. In terms of biological role, catalyzes the transfer of a methyl group from 5-methyltetrahydrofolate to homocysteine resulting in methionine formation. The sequence is that of 5-methyltetrahydropteroyltriglutamate--homocysteine methyltransferase from Mycobacterium tuberculosis (strain ATCC 25177 / H37Ra).